A 196-amino-acid chain; its full sequence is MSDSLNAAALDQLFRTARTQNAFADTPVSHEVLRELYELVKWGPTAANSGPARFVFVTSAEGKAKLKPALSEGNAAKTLAAPVTVIVAHDEDFHEKLPYLFPHADAKSWFDGPREGRTESAFRNGSLQGAYLILAARALGLDAGPMSGFDNAKVDAAFFAGTPIKSNFLVNLGYGDPAGLFPRSPRLSFDEAARFE.

It belongs to the nitroreductase family. HadB/RutE subfamily. FMN is required as a cofactor.

This chain is Putative NADH dehydrogenase/NAD(P)H nitroreductase XCV0587, found in Xanthomonas euvesicatoria pv. vesicatoria (strain 85-10) (Xanthomonas campestris pv. vesicatoria).